The following is a 461-amino-acid chain: Bifunctional protein GlmU (461 aa).

The tract at residues 1 to 232 is pyrophosphorylase; sequence MNLQIIILAA…SFEVQGINNR (232 aa). Residues 8–11, K22, Q73, and 78–79 contribute to the UDP-N-acetyl-alpha-D-glucosamine site; these read LAAG and GT. A Mg(2+)-binding site is contributed by D102. The UDP-N-acetyl-alpha-D-glucosamine site is built by G142, E157, and N230. Residue N230 participates in Mg(2+) binding. The tract at residues 233 to 253 is linker; that stretch reads QQLQQLERTWQQRAANQLMEK. An N-acetyltransferase region spans residues 254–461; sequence GATLADANRF…WKRPVKRERD (208 aa). 2 residues coordinate UDP-N-acetyl-alpha-D-glucosamine: R336 and K354. H366 serves as the catalytic Proton acceptor. Residues Y369 and N380 each contribute to the UDP-N-acetyl-alpha-D-glucosamine site. Residues A383, 389–390, S408, and A426 each bind acetyl-CoA; that span reads NY.

It in the N-terminal section; belongs to the N-acetylglucosamine-1-phosphate uridyltransferase family. This sequence in the C-terminal section; belongs to the transferase hexapeptide repeat family. As to quaternary structure, homotrimer. It depends on Mg(2+) as a cofactor.

The protein localises to the cytoplasm. It catalyses the reaction alpha-D-glucosamine 1-phosphate + acetyl-CoA = N-acetyl-alpha-D-glucosamine 1-phosphate + CoA + H(+). The enzyme catalyses N-acetyl-alpha-D-glucosamine 1-phosphate + UTP + H(+) = UDP-N-acetyl-alpha-D-glucosamine + diphosphate. Its pathway is nucleotide-sugar biosynthesis; UDP-N-acetyl-alpha-D-glucosamine biosynthesis; N-acetyl-alpha-D-glucosamine 1-phosphate from alpha-D-glucosamine 6-phosphate (route II): step 2/2. The protein operates within nucleotide-sugar biosynthesis; UDP-N-acetyl-alpha-D-glucosamine biosynthesis; UDP-N-acetyl-alpha-D-glucosamine from N-acetyl-alpha-D-glucosamine 1-phosphate: step 1/1. It participates in bacterial outer membrane biogenesis; LPS lipid A biosynthesis. Catalyzes the last two sequential reactions in the de novo biosynthetic pathway for UDP-N-acetylglucosamine (UDP-GlcNAc). The C-terminal domain catalyzes the transfer of acetyl group from acetyl coenzyme A to glucosamine-1-phosphate (GlcN-1-P) to produce N-acetylglucosamine-1-phosphate (GlcNAc-1-P), which is converted into UDP-GlcNAc by the transfer of uridine 5-monophosphate (from uridine 5-triphosphate), a reaction catalyzed by the N-terminal domain. The sequence is that of Bifunctional protein GlmU from Legionella pneumophila (strain Paris).